Here is an 88-residue protein sequence, read N- to C-terminus: Acylphosphatase (88 aa).

The 86-residue stretch at 3–88 (RLVALVKGRV…EAGLKGFHVY (86 aa)) folds into the Acylphosphatase-like domain. Residues Arg18 and Asn36 contribute to the active site.

Belongs to the acylphosphatase family.

The catalysed reaction is an acyl phosphate + H2O = a carboxylate + phosphate + H(+). This Thermus thermophilus (strain ATCC BAA-163 / DSM 7039 / HB27) protein is Acylphosphatase (acyP).